A 578-amino-acid chain; its full sequence is SUMOylated effector protein AmpA (578 aa).

A disordered region spans residues 144–169; it reads PQTVDPSVVESATGSGVDTQEEQEID. 3 consecutive repeat copies span residues 180–272, 304–425, and 428–557. Positions 180–557 are 3 X approximate tandem repeats; it reads TEEQEVILEE…VEADAGMQQE (378 aa). Positions 516–578 are disordered; the sequence is VSVEADAGMQ…DPDDEDVLSY (63 aa).

Post-translationally, polysumoylated during infection on at least two lysine residues, in the N- and C-terminal section. SUMO2/3 modification of AmpA throughout the infection cycle is likely critical for bacterial intracellular survival, while terminal SUMO1 conjugation of AmpA may promote a late-stage infection cycle event. Only a small portion of the available AmpA pool is actually SUMOylated at any given time.

Its subcellular location is the secreted. The protein resides in the host membrane. It is found in the host cytoplasm. The protein localises to the host cytosol. Functionally, secreted effector that hijacks host cell SUMOylation during A.phagocytophilum infection and is important for the pathogen's intracellular survival. This is SUMOylated effector protein AmpA from Anaplasma phagocytophilum (strain HZ).